A 430-amino-acid polypeptide reads, in one-letter code: Sorting nexin-4 (430 aa).

The segment covering 1 to 18 (MDSASADASVTGSGNAKG) has biased composition (polar residues). A disordered region spans residues 1 to 22 (MDSASADASVTGSGNAKGSSAE). One can recognise a PX domain in the interval 33–162 (LEILVSDPQK…IFLVGNEWDT (130 aa)). A 1,2-diacyl-sn-glycero-3-phospho-(1D-myo-inositol-3-phosphate) contacts are provided by arginine 83, lysine 109, and arginine 128. The stretch at 351-414 (ASRRDKINKL…NNLADENIKF (64 aa)) forms a coiled coil.

It belongs to the sorting nexin family.

The protein resides in the cytoplasm. Its subcellular location is the cytosol. The protein localises to the preautophagosomal structure membrane. It localises to the endosome membrane. In terms of biological role, sorting nexin, involved in the separation or division of vacuoles throughout the entire life cycle of the cells. Involved in retrieval of late-Golgi SNAREs from post-Golgi endosomes to the trans-Golgi network, for cytoplasm to vacuole transport (Cvt), and autophagy of large cargos including mitophagy, pexophagy and glycophagy. The sequence is that of Sorting nexin-4 (SNX4) from Candida glabrata (strain ATCC 2001 / BCRC 20586 / JCM 3761 / NBRC 0622 / NRRL Y-65 / CBS 138) (Yeast).